The chain runs to 105 residues: Protein FAM24A (105 aa).

The N-terminal stretch at 1-32 (MAKMFDLRTKIMIGIGSSLLVAAMVLLSVVFC) is a signal peptide.

Belongs to the FAM24 family.

The protein resides in the secreted. This is Protein FAM24A (FAM24A) from Homo sapiens (Human).